A 450-amino-acid chain; its full sequence is Transcription factor SCREAM2 (450 aa).

Disordered stretches follow at residues 1–47 (MNSD…NQND), 207–231 (RQSS…YERE), and 244–265 (GLNY…KGMP). The span at 209–220 (SSSSKMCNSESS) shows a compositional bias: low complexity. The span at 221-230 (SEMRKSSYER) shows a compositional bias: basic and acidic residues. One can recognise a bHLH domain in the interval 263–312 (GMPAKNLMAERRRRKKLNDRLYMLRSVVPKISKMDRASILGDAIDYLKEL). The ACT domain occupies 378–450 (NIHMFCGRRP…LDTAGYAGLV (73 aa)).

As to quaternary structure, homodimer. Heterodimers with SPCH, MUTE, and FAMA. As to expression, expressed constitutively in roots, leaves, stems, and flowers. Broad expression within stomatal cell lineages of leaf epidermis, except in mature guard-cells.

The protein resides in the nucleus. Its function is as follows. Mediates stomatal differentiation in the epidermis probably by controlling successive roles of SPCH, MUTE, and FAMA. Functions as a dimer with SPCH during stomatal initiation. The sequence is that of Transcription factor SCREAM2 (SCRM2) from Arabidopsis thaliana (Mouse-ear cress).